Reading from the N-terminus, the 186-residue chain is Adenine phosphoribosyltransferase (186 aa).

It belongs to the purine/pyrimidine phosphoribosyltransferase family. Homodimer.

Its subcellular location is the cytoplasm. The enzyme catalyses AMP + diphosphate = 5-phospho-alpha-D-ribose 1-diphosphate + adenine. It participates in purine metabolism; AMP biosynthesis via salvage pathway; AMP from adenine: step 1/1. Its function is as follows. Catalyzes a salvage reaction resulting in the formation of AMP, that is energically less costly than de novo synthesis. In Xanthomonas euvesicatoria pv. vesicatoria (strain 85-10) (Xanthomonas campestris pv. vesicatoria), this protein is Adenine phosphoribosyltransferase.